A 246-amino-acid chain; its full sequence is Probable transcriptional regulatory protein YebC (246 aa).

A disordered region spans residues M1–K20.

This sequence belongs to the TACO1 family.

The protein localises to the cytoplasm. This chain is Probable transcriptional regulatory protein YebC, found in Shigella flexneri.